The sequence spans 284 residues: Pantothenate synthetase (284 aa).

ATP is bound at residue 31–38 (MGNLHAGH). His38 functions as the Proton donor in the catalytic mechanism. Gln62 provides a ligand contact to (R)-pantoate. Gln62 provides a ligand contact to beta-alanine. Residue 150–153 (GKKD) participates in ATP binding. Gln156 lines the (R)-pantoate pocket. ATP is bound by residues Val179 and 187 to 190 (MSSR).

It belongs to the pantothenate synthetase family. In terms of assembly, homodimer.

The protein localises to the cytoplasm. The enzyme catalyses (R)-pantoate + beta-alanine + ATP = (R)-pantothenate + AMP + diphosphate + H(+). It participates in cofactor biosynthesis; (R)-pantothenate biosynthesis; (R)-pantothenate from (R)-pantoate and beta-alanine: step 1/1. Functionally, catalyzes the condensation of pantoate with beta-alanine in an ATP-dependent reaction via a pantoyl-adenylate intermediate. This chain is Pantothenate synthetase, found in Xanthomonas campestris pv. campestris (strain 8004).